The primary structure comprises 64 residues: Large ribosomal subunit protein bL35 (64 aa).

Disordered regions lie at residues 1-22 (MPKA…TGKI) and 34-64 (EHKP…LLNG). Positions 34-48 (EHKPSTRTRRLDGHT) are enriched in basic and acidic residues. Residues 50–64 (VSANDTQRVNSLLNG) are compositionally biased toward polar residues.

This sequence belongs to the bacterial ribosomal protein bL35 family.

The polypeptide is Large ribosomal subunit protein bL35 (Mycobacterium leprae (strain Br4923)).